A 203-amino-acid polypeptide reads, in one-letter code: Ribonuclease HII (203 aa).

The region spanning 14–203 (GVIAGVDEVG…ILNSTKRALL (190 aa)) is the RNase H type-2 domain. Residues Asp-20, Glu-21, and Asp-112 each coordinate a divalent metal cation.

The protein belongs to the RNase HII family. Mn(2+) is required as a cofactor. It depends on Mg(2+) as a cofactor.

Its subcellular location is the cytoplasm. The catalysed reaction is Endonucleolytic cleavage to 5'-phosphomonoester.. In terms of biological role, endonuclease that specifically degrades the RNA of RNA-DNA hybrids. The protein is Ribonuclease HII of Wolbachia sp. subsp. Brugia malayi (strain TRS).